A 126-amino-acid chain; its full sequence is Profilin (126 aa).

It belongs to the profilin family. As to quaternary structure, occurs in many kinds of cells as a complex with monomeric actin in a 1:1 ratio.

Its subcellular location is the cytoplasm. It is found in the cytoskeleton. Its function is as follows. Binds to actin and affects the structure of the cytoskeleton. At high concentrations, profilin prevents the polymerization of actin, whereas it enhances it at low concentrations. By binding to PIP2, it inhibits the formation of IP3 and DG. The sequence is that of Profilin (PFY1) from Saccharomyces cerevisiae (strain ATCC 204508 / S288c) (Baker's yeast).